The sequence spans 430 residues: 3-phosphoshikimate 1-carboxyvinyltransferase (430 aa).

3 residues coordinate 3-phosphoshikimate: K23, S24, and R28. K23 contacts phosphoenolpyruvate. Positions 95 and 123 each coordinate phosphoenolpyruvate. S169, Q171, D315, and K342 together coordinate 3-phosphoshikimate. Q171 is a phosphoenolpyruvate binding site. The active-site Proton acceptor is D315. Positions 346 and 388 each coordinate phosphoenolpyruvate.

It belongs to the EPSP synthase family. As to quaternary structure, monomer.

The protein localises to the cytoplasm. The catalysed reaction is 3-phosphoshikimate + phosphoenolpyruvate = 5-O-(1-carboxyvinyl)-3-phosphoshikimate + phosphate. Its pathway is metabolic intermediate biosynthesis; chorismate biosynthesis; chorismate from D-erythrose 4-phosphate and phosphoenolpyruvate: step 6/7. Functionally, catalyzes the transfer of the enolpyruvyl moiety of phosphoenolpyruvate (PEP) to the 5-hydroxyl of shikimate-3-phosphate (S3P) to produce enolpyruvyl shikimate-3-phosphate and inorganic phosphate. The sequence is that of 3-phosphoshikimate 1-carboxyvinyltransferase from Streptococcus pyogenes serotype M2 (strain MGAS10270).